We begin with the raw amino-acid sequence, 317 residues long: Phospho-N-acetylmuramoyl-pentapeptide-transferase (317 aa).

Helical transmembrane passes span 6–26, 52–72, 78–98, 114–134, 145–165, 171–191, 194–214, 223–244, and 297–317; these read IVMAIVISFIVASILGPIIIP, PTIGGLIFIFATIITMFIMVG, AMIALYSFVGFGFVGFLDDLL, MILLLIVSGFLTWYAYKYIGT, INFGLFYIPFVMFYFAGVTNA, GLDGLATSVTVLVTTFLGIIS, LGHISLAIFCVALAGALLAFL, VFMGDTGSLALGGAVAMVALIL, and KIVSVFSIITVVFCFIAFASL.

Belongs to the glycosyltransferase 4 family. MraY subfamily. It depends on Mg(2+) as a cofactor.

It is found in the cell membrane. It carries out the reaction UDP-N-acetyl-alpha-D-muramoyl-L-alanyl-gamma-D-glutamyl-meso-2,6-diaminopimeloyl-D-alanyl-D-alanine + di-trans,octa-cis-undecaprenyl phosphate = di-trans,octa-cis-undecaprenyl diphospho-N-acetyl-alpha-D-muramoyl-L-alanyl-D-glutamyl-meso-2,6-diaminopimeloyl-D-alanyl-D-alanine + UMP. It functions in the pathway cell wall biogenesis; peptidoglycan biosynthesis. Functionally, catalyzes the initial step of the lipid cycle reactions in the biosynthesis of the cell wall peptidoglycan: transfers peptidoglycan precursor phospho-MurNAc-pentapeptide from UDP-MurNAc-pentapeptide onto the lipid carrier undecaprenyl phosphate, yielding undecaprenyl-pyrophosphoryl-MurNAc-pentapeptide, known as lipid I. This is Phospho-N-acetylmuramoyl-pentapeptide-transferase from Clostridium perfringens (strain 13 / Type A).